The sequence spans 206 residues: Protein Nef (206 aa).

Glycine 2 carries the N-myristoyl glycine; by host lipid modification. Serine 6 bears the Phosphoserine; by host mark. An acidic; interacts with host PACS1 and PACS2; stabilizes the interaction of NEF/MHC-I with host AP1M1; necessary for MHC-I internalization region spans residues 62 to 65 (EEEE). An SH3-binding; interaction with Src family tyrosine kinases region spans residues 69–78 (PVTPQVPLRP). Residues 72–75 (PQVP) carry the PxxP; stabilizes the interaction of NEF/MHC-I with host AP1M1; necessary for MHC-I internalization motif. The segment at 108 to 124 (DILDLWIYHTQGYFPDW) is mediates dimerization, Nef-PTE1 interaction. The tract at residues 148–180 (VEPEKLEEANKGENTSLLHPVSLHGMDDPEREV) is binding to ATP6V1H. The Dileucine internalization motif; necessary for CD4 internalization signature appears at 164–165 (LL). A Diacidic; necessary for CD4 internalization motif is present at residues 174–175 (DD).

The protein belongs to the lentivirus primate group Nef protein family. In terms of assembly, monomer; cytosolic form. Homodimer; membrane bound form. Interacts with Nef associated p21-activated kinase (PAK2); this interaction activates PAK2. Associates with the Nef-MHC-I-AP1 complex; this complex is required for MHC-I internalization. Interacts (via C-terminus) with host PI3-kinase. Interacts with host PACS1; this interaction seems to be weak. Interacts with host PACS2. Interacts with host LCK and MAPK3; these interactions inhibit the kinase activity of the latter. Interacts with host ATP6V1H; this interaction may play a role in CD4 endocytosis. Associates with the CD4-Nef-AP2 complex; this complex is required for CD4 internalization. Interacts with host AP2 subunit alpha and AP2 subunit sigma2. Interacts with TCR-zeta chain; this interaction up-regulates the Fas ligand (FasL) surface expression. Interacts with host HCK, LYN, and SRC; these interactions activate the Src family kinases. Interacts with MAP3K5; this interaction inhibits the Fas and TNFR-mediated death signals. Interacts with beta-COP and PTE1. Interacts with human RACK1; this increases Nef phosphorylation by PKC. Interacts with TP53; this interaction decreases the half-life of TP53, protecting the infected cell against p53-mediated apoptosis. The virion-associated Nef proteins are cleaved by the viral protease to release the soluble C-terminal core protein. Nef is probably cleaved concomitantly with viral structural proteins on maturation of virus particles. In terms of processing, myristoylated. Post-translationally, phosphorylated on serine residues, probably by host PKCdelta and theta.

The protein localises to the host cell membrane. It localises to the virion. The protein resides in the secreted. Its subcellular location is the host Golgi apparatus membrane. Factor of infectivity and pathogenicity, required for optimal virus replication. Alters numerous pathways of T-lymphocyte function and down-regulates immunity surface molecules in order to evade host defense and increase viral infectivity. Alters the functionality of other immunity cells, like dendritic cells, monocytes/macrophages and NK cells. Its function is as follows. In infected CD4(+) T-lymphocytes, down-regulates the surface MHC-I, mature MHC-II, CD4, CD28, CCR5 and CXCR4 molecules. Mediates internalization and degradation of host CD4 through the interaction of with the cytoplasmic tail of CD4, the recruitment of AP-2 (clathrin adapter protein complex 2), internalization through clathrin coated pits, and subsequent transport to endosomes and lysosomes for degradation. Diverts host MHC-I molecules to the trans-Golgi network-associated endosomal compartments by an endocytic pathway to finally target them for degradation. MHC-I down-regulation may involve AP-1 (clathrin adapter protein complex 1) or possibly Src family kinase-ZAP70/Syk-PI3K cascade recruited by PACS2. In consequence infected cells are masked for immune recognition by cytotoxic T-lymphocytes. Decreasing the number of immune receptors also prevents reinfection by more HIV particles (superinfection). Down-regulates host SERINC3 and SERINC5 thereby excluding these proteins from the viral particles. Virion infectivity is drastically higher when SERINC3 or SERINC5 are excluded from the viral envelope, because these host antiviral proteins impair the membrane fusion event necessary for subsequent virion penetration. Functionally, bypasses host T-cell signaling by inducing a transcriptional program nearly identical to that of anti-CD3 cell activation. Interaction with TCR-zeta chain up-regulates the Fas ligand (FasL). Increasing surface FasL molecules and decreasing surface MHC-I molecules on infected CD4(+) cells send attacking cytotoxic CD8+ T-lymphocytes into apoptosis. In terms of biological role, plays a role in optimizing the host cell environment for viral replication without causing cell death by apoptosis. Protects the infected cells from apoptosis in order to keep them alive until the next virus generation is ready to strike. Inhibits the Fas and TNFR-mediated death signals by blocking MAP3K5/ASK1. Decreases the half-life of TP53, protecting the infected cell against p53-mediated apoptosis. Inhibits the apoptotic signals regulated by the Bcl-2 family proteins through the formation of a Nef/PI3-kinase/PAK2 complex that leads to activation of PAK2 and induces phosphorylation of host BAD. Extracellular Nef protein targets CD4(+) T-lymphocytes for apoptosis by interacting with CXCR4 surface receptors. The chain is Protein Nef from Human immunodeficiency virus type 1 group M subtype B (isolate LW123) (HIV-1).